The sequence spans 98 residues: Putative pterin-4-alpha-carbinolamine dehydratase (98 aa).

Belongs to the pterin-4-alpha-carbinolamine dehydratase family.

It catalyses the reaction (4aS,6R)-4a-hydroxy-L-erythro-5,6,7,8-tetrahydrobiopterin = (6R)-L-erythro-6,7-dihydrobiopterin + H2O. The polypeptide is Putative pterin-4-alpha-carbinolamine dehydratase (Mesorhizobium japonicum (strain LMG 29417 / CECT 9101 / MAFF 303099) (Mesorhizobium loti (strain MAFF 303099))).